The chain runs to 126 residues: Holo-[acyl-carrier-protein] synthase (126 aa).

Mg(2+) contacts are provided by aspartate 9 and glutamate 58.

Belongs to the P-Pant transferase superfamily. AcpS family. The cofactor is Mg(2+).

The protein resides in the cytoplasm. It carries out the reaction apo-[ACP] + CoA = holo-[ACP] + adenosine 3',5'-bisphosphate + H(+). Transfers the 4'-phosphopantetheine moiety from coenzyme A to a Ser of acyl-carrier-protein. In Yersinia pestis bv. Antiqua (strain Angola), this protein is Holo-[acyl-carrier-protein] synthase.